Reading from the N-terminus, the 494-residue chain is Guanosine-5'-triphosphate,3'-diphosphate pyrophosphatase (494 aa).

The protein belongs to the GppA/Ppx family. GppA subfamily.

It carries out the reaction guanosine 3'-diphosphate 5'-triphosphate + H2O = guanosine 3',5'-bis(diphosphate) + phosphate + H(+). It functions in the pathway purine metabolism; ppGpp biosynthesis; ppGpp from GTP: step 2/2. Its function is as follows. Catalyzes the conversion of pppGpp to ppGpp. Guanosine pentaphosphate (pppGpp) is a cytoplasmic signaling molecule which together with ppGpp controls the 'stringent response', an adaptive process that allows bacteria to respond to amino acid starvation, resulting in the coordinated regulation of numerous cellular activities. The polypeptide is Guanosine-5'-triphosphate,3'-diphosphate pyrophosphatase (Escherichia coli O139:H28 (strain E24377A / ETEC)).